The chain runs to 157 residues: Endoribonuclease YbeY (157 aa).

Positions 116, 120, and 126 each coordinate Zn(2+).

Belongs to the endoribonuclease YbeY family. Zn(2+) is required as a cofactor.

It is found in the cytoplasm. Its function is as follows. Single strand-specific metallo-endoribonuclease involved in late-stage 70S ribosome quality control and in maturation of the 3' terminus of the 16S rRNA. The chain is Endoribonuclease YbeY from Blochmanniella pennsylvanica (strain BPEN).